Here is a 196-residue protein sequence, read N- to C-terminus: Large ribosomal subunit protein bL9 (196 aa).

The protein belongs to the bacterial ribosomal protein bL9 family.

In terms of biological role, binds to the 23S rRNA. This chain is Large ribosomal subunit protein bL9, found in Bradyrhizobium sp. (strain ORS 278).